Here is a 156-residue protein sequence, read N- to C-terminus: Endoribonuclease YbeY (156 aa).

Residues histidine 122, histidine 126, and histidine 132 each contribute to the Zn(2+) site.

It belongs to the endoribonuclease YbeY family. Zn(2+) serves as cofactor.

Its subcellular location is the cytoplasm. In terms of biological role, single strand-specific metallo-endoribonuclease involved in late-stage 70S ribosome quality control and in maturation of the 3' terminus of the 16S rRNA. This chain is Endoribonuclease YbeY, found in Pediococcus pentosaceus (strain ATCC 25745 / CCUG 21536 / LMG 10740 / 183-1w).